The chain runs to 258 residues: Phycoerythrobilin:ferredoxin oxidoreductase (258 aa).

Belongs to the HY2 family.

It catalyses the reaction (3Z)-phycoerythrobilin + oxidized 2[4Fe-4S]-[ferredoxin] = 15,16-dihydrobiliverdin + reduced 2[4Fe-4S]-[ferredoxin] + 2 H(+). Functionally, catalyzes the two-electron reduction of the C2 and C3(1) diene system of 15,16-dihydrobiliverdin. In Prochlorococcus marinus (strain NATL2A), this protein is Phycoerythrobilin:ferredoxin oxidoreductase.